A 73-amino-acid chain; its full sequence is Venom peptide La1 (73 aa).

K73 bears the Lysine amide mark.

It belongs to the scorpion La1-like peptide family. In terms of processing, contains 4 disulfide bonds. As to expression, expressed by the venom gland.

The protein resides in the secreted. Not toxic to insect. The chain is Venom peptide La1 from Liocheles australasiae (Dwarf wood scorpion).